We begin with the raw amino-acid sequence, 452 residues long: Type II methyltransferase M.EcaI (452 aa).

It belongs to the N(4)/N(6)-methyltransferase family.

The enzyme catalyses a 2'-deoxyadenosine in DNA + S-adenosyl-L-methionine = an N(6)-methyl-2'-deoxyadenosine in DNA + S-adenosyl-L-homocysteine + H(+). Functionally, a beta subtype methylase, recognizes the double-stranded sequence 5'-GGTNACC-3', methylates A-5 on both strands and protects the DNA from cleavage by the EcaI endonuclease. This chain is Type II methyltransferase M.EcaI (ecaIM), found in Enterobacter cloacae.